Here is a 530-residue protein sequence, read N- to C-terminus: NAD(+) kinase (530 aa).

3 disordered regions span residues methionine 1 to asparagine 27, isoleucine 57 to asparagine 99, and serine 486 to valine 530. Residues tryptophan 13–asparagine 25 are compositionally biased toward basic and acidic residues. Low complexity predominate over residues serine 59–leucine 75. The span at isoleucine 88–asparagine 99 shows a compositional bias: polar residues. Phosphoserine is present on residues serine 499 and serine 503. Positions serine 499 to valine 508 are enriched in acidic residues.

Belongs to the NAD kinase family. As to quaternary structure, homohexamer.

It catalyses the reaction NAD(+) + ATP = ADP + NADP(+) + H(+). Specifically phosphorylates NAD in the presence of ATP, dATP, or CTP as phosphoryl donors. In Saccharomyces cerevisiae (strain ATCC 204508 / S288c) (Baker's yeast), this protein is NAD(+) kinase (UTR1).